Consider the following 88-residue polypeptide: Small ribosomal subunit protein bS16 (88 aa).

Belongs to the bacterial ribosomal protein bS16 family.

The chain is Small ribosomal subunit protein bS16 from Mycoplasma pneumoniae (strain ATCC 29342 / M129 / Subtype 1) (Mycoplasmoides pneumoniae).